A 733-amino-acid polypeptide reads, in one-letter code: mRNA 3'-end-processing protein rna14 (733 aa).

The interval 1–45 (MNSDDNVEADASSNIIKDSPKIKEQENTSTVNESDVLATSTTASS) is disordered. Over residues 27-45 (NTSTVNESDVLATSTTASS) the composition is skewed to polar residues. HAT repeat units lie at residues 85–117 (GKHE…SELA), 119–150 (NDFH…YIRR), 158–193 (QSRS…FLRS), 204–237 (QKLD…FENS), 269–302 (EGLR…WEQS), and 312–344 (MLQN…YFLS). Residues 404–414 (DSKASSSSESS) show a composition bias toward low complexity. The disordered stretch occupies residues 404–425 (DSKASSSSESSTDGNPQEKKLP). An HAT 7 repeat occupies 523-557 (NDETNARALFEKAIPRIAADEAKPIYQKWLDYESN).

It localises to the nucleus. It is found in the cytoplasm. Its function is as follows. Component of the cleavage factor IA (CFIA) complex, which is involved in the endonucleolytic cleavage during polyadenylation-dependent pre-mRNA 3'-end formation. This is mRNA 3'-end-processing protein rna14 (rna14) from Schizosaccharomyces pombe (strain 972 / ATCC 24843) (Fission yeast).